The sequence spans 252 residues: 4-hydroxy-tetrahydrodipicolinate reductase (252 aa).

Residues 8-13, 85-87, and 109-112 each bind NAD(+); these read GCSGKM, CTT, and SANM. Histidine 142 functions as the Proton donor/acceptor in the catalytic mechanism. Histidine 143 is a binding site for (S)-2,3,4,5-tetrahydrodipicolinate. The active-site Proton donor is lysine 146. 152-153 lines the (S)-2,3,4,5-tetrahydrodipicolinate pocket; it reads GT.

Belongs to the DapB family.

The protein localises to the cytoplasm. The enzyme catalyses (S)-2,3,4,5-tetrahydrodipicolinate + NAD(+) + H2O = (2S,4S)-4-hydroxy-2,3,4,5-tetrahydrodipicolinate + NADH + H(+). It carries out the reaction (S)-2,3,4,5-tetrahydrodipicolinate + NADP(+) + H2O = (2S,4S)-4-hydroxy-2,3,4,5-tetrahydrodipicolinate + NADPH + H(+). It functions in the pathway amino-acid biosynthesis; L-lysine biosynthesis via DAP pathway; (S)-tetrahydrodipicolinate from L-aspartate: step 4/4. Catalyzes the conversion of 4-hydroxy-tetrahydrodipicolinate (HTPA) to tetrahydrodipicolinate. In Clostridium novyi (strain NT), this protein is 4-hydroxy-tetrahydrodipicolinate reductase.